Here is a 738-residue protein sequence, read N- to C-terminus: DNA topoisomerase 4 subunit A (738 aa).

Residues 32–496 enclose the Topo IIA-type catalytic domain; the sequence is LPDVRDGLKP…SFEEVTLTNQ (465 aa). Tyr-120 (O-(5'-phospho-DNA)-tyrosine intermediate) is an active-site residue.

It belongs to the type II topoisomerase GyrA/ParC subunit family. ParC type 1 subfamily. As to quaternary structure, heterotetramer composed of ParC and ParE.

It localises to the cell membrane. It catalyses the reaction ATP-dependent breakage, passage and rejoining of double-stranded DNA.. Functionally, topoisomerase IV is essential for chromosome segregation. It relaxes supercoiled DNA. Performs the decatenation events required during the replication of a circular DNA molecule. This chain is DNA topoisomerase 4 subunit A, found in Rickettsia conorii (strain ATCC VR-613 / Malish 7).